Here is a 117-residue protein sequence, read N- to C-terminus: MIVELYSNIIEVRRYTTKDSLCSIFESGSTSHFEINQLQVKRLNLLQNQFASVFTSFHPKDNTKGIHINFFSPVTRITDLQYSFFYTNQILFGTRYLIKMIQNFVTGKVFTRTNQSK.

This is an uncharacterized protein from Saccharomyces cerevisiae (strain ATCC 204508 / S288c) (Baker's yeast).